Consider the following 613-residue polypeptide: tRNA 5-methylaminomethyl-2-thiouridine biosynthesis bifunctional protein MnmC (613 aa).

A tRNA (mnm(5)s(2)U34)-methyltransferase region spans residues 1–225 (MKKAKLIFKD…KREMIKAYLE (225 aa)). Residues 252 to 613 (IGAGISSAVL…FLVRKLKKGL (362 aa)) are FAD-dependent cmnm(5)s(2)U34 oxidoreductase.

This sequence in the N-terminal section; belongs to the methyltransferase superfamily. tRNA (mnm(5)s(2)U34)-methyltransferase family. The protein in the C-terminal section; belongs to the DAO family. Requires FAD as cofactor.

The protein localises to the cytoplasm. It catalyses the reaction 5-aminomethyl-2-thiouridine(34) in tRNA + S-adenosyl-L-methionine = 5-methylaminomethyl-2-thiouridine(34) in tRNA + S-adenosyl-L-homocysteine + H(+). Its function is as follows. Catalyzes the last two steps in the biosynthesis of 5-methylaminomethyl-2-thiouridine (mnm(5)s(2)U) at the wobble position (U34) in tRNA. Catalyzes the FAD-dependent demodification of cmnm(5)s(2)U34 to nm(5)s(2)U34, followed by the transfer of a methyl group from S-adenosyl-L-methionine to nm(5)s(2)U34, to form mnm(5)s(2)U34. This chain is tRNA 5-methylaminomethyl-2-thiouridine biosynthesis bifunctional protein MnmC, found in Campylobacter jejuni subsp. doylei (strain ATCC BAA-1458 / RM4099 / 269.97).